The sequence spans 169 residues: Crossover junction endodeoxyribonuclease RuvC (169 aa).

Residues D11, E71, and D143 contribute to the active site. Mg(2+) contacts are provided by D11, E71, and D143.

Belongs to the RuvC family. Homodimer which binds Holliday junction (HJ) DNA. The HJ becomes 2-fold symmetrical on binding to RuvC with unstacked arms; it has a different conformation from HJ DNA in complex with RuvA. In the full resolvosome a probable DNA-RuvA(4)-RuvB(12)-RuvC(2) complex forms which resolves the HJ. It depends on Mg(2+) as a cofactor.

It is found in the cytoplasm. It carries out the reaction Endonucleolytic cleavage at a junction such as a reciprocal single-stranded crossover between two homologous DNA duplexes (Holliday junction).. Functionally, the RuvA-RuvB-RuvC complex processes Holliday junction (HJ) DNA during genetic recombination and DNA repair. Endonuclease that resolves HJ intermediates. Cleaves cruciform DNA by making single-stranded nicks across the HJ at symmetrical positions within the homologous arms, yielding a 5'-phosphate and a 3'-hydroxyl group; requires a central core of homology in the junction. The consensus cleavage sequence is 5'-(A/T)TT(C/G)-3'. Cleavage occurs on the 3'-side of the TT dinucleotide at the point of strand exchange. HJ branch migration catalyzed by RuvA-RuvB allows RuvC to scan DNA until it finds its consensus sequence, where it cleaves and resolves the cruciform DNA. The sequence is that of Crossover junction endodeoxyribonuclease RuvC from Rhizobium leguminosarum bv. trifolii (strain WSM2304).